The primary structure comprises 235 residues: Small ribosomal subunit protein uS2c (235 aa).

The protein belongs to the universal ribosomal protein uS2 family.

It is found in the plastid. The protein resides in the chloroplast. This Guillardia theta (Cryptophyte) protein is Small ribosomal subunit protein uS2c (rps2).